We begin with the raw amino-acid sequence, 231 residues long: Large ribosomal subunit protein uL1 (231 aa).

It belongs to the universal ribosomal protein uL1 family. As to quaternary structure, part of the 50S ribosomal subunit.

Binds directly to 23S rRNA. The L1 stalk is quite mobile in the ribosome, and is involved in E site tRNA release. In terms of biological role, protein L1 is also a translational repressor protein, it controls the translation of the L11 operon by binding to its mRNA. The polypeptide is Large ribosomal subunit protein uL1 (Azotobacter vinelandii (strain DJ / ATCC BAA-1303)).